The primary structure comprises 274 residues: 4-deoxy-L-threo-5-hexosulose-uronate ketol-isomerase (274 aa).

Zn(2+) is bound by residues H192, H194, E199, and H241.

The protein belongs to the KduI family. The cofactor is Zn(2+).

The enzyme catalyses 5-dehydro-4-deoxy-D-glucuronate = 3-deoxy-D-glycero-2,5-hexodiulosonate. It functions in the pathway glycan metabolism; pectin degradation; 2-dehydro-3-deoxy-D-gluconate from pectin: step 4/5. Functionally, catalyzes the isomerization of 5-dehydro-4-deoxy-D-glucuronate to 3-deoxy-D-glycero-2,5-hexodiulosonate. This is 4-deoxy-L-threo-5-hexosulose-uronate ketol-isomerase from Agrobacterium fabrum (strain C58 / ATCC 33970) (Agrobacterium tumefaciens (strain C58)).